We begin with the raw amino-acid sequence, 408 residues long: Beta-ureidopropionase (408 aa).

Residues 90–360 form the CN hydrolase domain; it reads VRVGLIQNSI…DGLLISDMDL (271 aa). Residue Glu-137 is the Proton acceptor of the active site. Catalysis depends on Lys-212, which acts as the Proton donor. The Nucleophile role is filled by Cys-249.

The protein belongs to the carbon-nitrogen hydrolase superfamily. BUP family. Homodimer, homotetramer, homooctamer; can also form higher homooligomers.

Its subcellular location is the cytoplasm. The enzyme catalyses 3-(carbamoylamino)propanoate + H2O + 2 H(+) = beta-alanine + NH4(+) + CO2. The catalysed reaction is 3-(carbamoylamino)-2-methylpropanoate + H2O + 2 H(+) = (R)-3-amino-2-methylpropanoate + NH4(+) + CO2. It participates in amino-acid biosynthesis; beta-alanine biosynthesis. Catalyzes a late step in pyrimidine degradation. Converts N-carbamoyl-beta-aminoisobutyrate and N-carbamoyl-beta-alanine (3-ureidopropanoate) to, respectively, beta-aminoisobutyrate and beta-alanine, ammonia and carbon dioxide. Involved in the recycling of nitrogen from nucleobases to general nitrogen metabolism. The sequence is that of Beta-ureidopropionase from Arabidopsis thaliana (Mouse-ear cress).